A 315-amino-acid polypeptide reads, in one-letter code: Zinc finger protein 691 (315 aa).

The segment covering 1–10 (MSLCSPTHSA) has biased composition (polar residues). The tract at residues 1 to 90 (MSLCSPTHSA…QETHPKKPWQ (90 aa)) is disordered. The segment covering 33–58 (GSEKEQSPEPHLPEEGEGGKPWRVDD) has biased composition (basic and acidic residues). 3 positions are modified to phosphoserine: S39, S75, and S77. A Glycyl lysine isopeptide (Lys-Gly) (interchain with G-Cter in SUMO2) cross-link involves residue K113. 7 consecutive C2H2-type zinc fingers follow at residues 115–137 (FICA…QRIH), 143–165 (YKCS…ERIH), 171–193 (YKCP…QQDH), 199–221 (YRCD…HRTH), 227–249 (YICC…HRTH), 255–277 (YECT…QRTH), and 283–305 (YRCT…QKTH).

This sequence belongs to the krueppel C2H2-type zinc-finger protein family.

It localises to the nucleus. In terms of biological role, may be involved in transcriptional regulation. The protein is Zinc finger protein 691 (ZNF691) of Homo sapiens (Human).